A 177-amino-acid polypeptide reads, in one-letter code: RNA polymerase sigma-E factor (177 aa).

The Polymerase core binding signature appears at 34–47 (DLLQTALARTYGRW). A DNA-binding region (H-T-H motif) is located at residues 128–147 (TEETAAALGMSAGTVKSTLH).

This sequence belongs to the sigma-70 factor family. ECF subfamily.

It localises to the cytoplasm. Sigma factors are initiation factors that promote the attachment of RNA polymerase to specific initiation sites and are then released. This sigma factor is required for normal cell wall integrity; it is recruited by RNA polymerase to transcribe genes with cell wall-related functions. It is also involved in the transcription of the dagA gene coding for an extracellular agar-degrading enzyme. The protein is RNA polymerase sigma-E factor (sigE) of Streptomyces coelicolor (strain ATCC BAA-471 / A3(2) / M145).